A 698-amino-acid polypeptide reads, in one-letter code: Elongation factor G (698 aa).

The region spanning alanine 10–leucine 285 is the tr-type G domain. Residues alanine 19–threonine 26, aspartate 83–histidine 87, and asparagine 137–aspartate 140 contribute to the GTP site.

Belongs to the TRAFAC class translation factor GTPase superfamily. Classic translation factor GTPase family. EF-G/EF-2 subfamily.

The protein localises to the cytoplasm. Catalyzes the GTP-dependent ribosomal translocation step during translation elongation. During this step, the ribosome changes from the pre-translocational (PRE) to the post-translocational (POST) state as the newly formed A-site-bound peptidyl-tRNA and P-site-bound deacylated tRNA move to the P and E sites, respectively. Catalyzes the coordinated movement of the two tRNA molecules, the mRNA and conformational changes in the ribosome. The protein is Elongation factor G of Frankia alni (strain DSM 45986 / CECT 9034 / ACN14a).